The primary structure comprises 258 residues: uncharacterized protein (258 aa).

Residues 16 to 148 form the Cyclin N-terminal domain; sequence EAFDSFEYAE…VLRALNFDTH (133 aa).

Belongs to the cyclin family. Cyclin L subfamily.

The protein localises to the cytoplasm. The protein resides in the nucleus. This is an uncharacterized protein from Schizosaccharomyces pombe (strain 972 / ATCC 24843) (Fission yeast).